Reading from the N-terminus, the 106-residue chain is uncharacterized protein (106 aa).

This is an uncharacterized protein from Escherichia coli O6:H1 (strain CFT073 / ATCC 700928 / UPEC).